Here is a 259-residue protein sequence, read N- to C-terminus: Chloroplastic group IIB intron splicing facilitator CRS2, chloroplastic (259 aa).

A disordered region spans residues 1–21 (MSLAVATPASARLSPLTTSSP). The N-terminal 49 residues, 1-49 (MSLAVATPASARLSPLTTSSPEPCRRRRLLLSAAAPLRRTRLRRRIAVV), are a transit peptide targeting the chloroplast. Tyr-77 is a tRNA binding site. The active-site Proton acceptor is His-82. TRNA contacts are provided by Tyr-127, Asn-129, and Asn-175.

This sequence belongs to the PTH family. CRS2 subfamily. In terms of assembly, part of large ribonucleo-protein complexes that include group IIB introns and either CAF1 or CAF2.

The protein localises to the plastid. The protein resides in the chloroplast stroma. Its function is as follows. Required for the splicing of group IIB introns in chloroplasts. The polypeptide is Chloroplastic group IIB intron splicing facilitator CRS2, chloroplastic (Oryza sativa subsp. japonica (Rice)).